A 130-amino-acid polypeptide reads, in one-letter code: Small ribosomal subunit protein uS11 (130 aa).

The protein belongs to the universal ribosomal protein uS11 family. As to quaternary structure, part of the 30S ribosomal subunit. Interacts with proteins S7 and S18. Binds to IF-3.

In terms of biological role, located on the platform of the 30S subunit, it bridges several disparate RNA helices of the 16S rRNA. Forms part of the Shine-Dalgarno cleft in the 70S ribosome. This chain is Small ribosomal subunit protein uS11, found in Shewanella violacea (strain JCM 10179 / CIP 106290 / LMG 19151 / DSS12).